We begin with the raw amino-acid sequence, 166 residues long: Glutamyl-tRNA(Gln) amidotransferase subunit C-2, mitochondrial (166 aa).

It belongs to the GatC family. In terms of assembly, subunit of the heterotrimeric GatCAB amidotransferase (AdT) complex, composed of A, B and C subunits.

Its subcellular location is the mitochondrion. It catalyses the reaction L-glutamyl-tRNA(Gln) + L-glutamine + ATP + H2O = L-glutaminyl-tRNA(Gln) + L-glutamate + ADP + phosphate + H(+). Functionally, allows the formation of correctly charged Gln-tRNA(Gln) through the transamidation of misacylated Glu-tRNA(Gln) in the mitochondria. The reaction takes place in the presence of glutamine and ATP through an activated gamma-phospho-Glu-tRNA(Gln). The polypeptide is Glutamyl-tRNA(Gln) amidotransferase subunit C-2, mitochondrial (Culex quinquefasciatus (Southern house mosquito)).